A 140-amino-acid polypeptide reads, in one-letter code: Putative cell wall protein (140 aa).

Residues 1–21 (MASSLITSAVIVVVLSLVLGS) form the signal peptide. Positions 85 to 98 (TGGGIPSYNGGQGA) are enriched in gly residues. The disordered stretch occupies residues 85–140 (TGGGIPSYNGGQGAGPHTQLPGGDDTLVPNPGFEAPTPTIGAGTGSNGQVPPVPLP).

As to expression, inflorescence.

The protein localises to the secreted. The protein resides in the cell wall. This chain is Putative cell wall protein, found in Arabidopsis thaliana (Mouse-ear cress).